We begin with the raw amino-acid sequence, 520 residues long: Amine oxidase [flavin-containing] B (520 aa).

Ser2 bears the N-acetylserine mark. Residues 2–489 (SGKCDVVVVG…TFLERHLPSV (488 aa)) are Cytoplasmic-facing. Lys52 is subject to N6-acetyllysine. Cys397 carries the S-8alpha-FAD cysteine modification. The helical; Anchor for type IV membrane protein transmembrane segment at 490–516 (PGLLRLIGLTAIFSATALGVLAHKRGL) threads the bilayer. Residues 517–520 (LVRV) are Mitochondrial intermembrane-facing.

It belongs to the flavin monoamine oxidase family. As to quaternary structure, monomer, homo- or heterodimer (containing two subunits of similar size). Each subunit contains a covalently bound flavin. Enzymatically active as monomer. FAD is required as a cofactor.

The protein localises to the mitochondrion outer membrane. The enzyme catalyses a secondary aliphatic amine + O2 + H2O = a primary amine + an aldehyde + H2O2. It catalyses the reaction (R)-adrenaline + O2 + H2O = (R)-3,4-dihydroxymandelaldehyde + methylamine + H2O2. The catalysed reaction is a primary methyl amine + O2 + H2O = an aldehyde + H2O2 + NH4(+). It carries out the reaction benzylamine + O2 + H2O = benzaldehyde + H2O2 + NH4(+). The enzyme catalyses dopamine + O2 + H2O = 3,4-dihydroxyphenylacetaldehyde + H2O2 + NH4(+). It catalyses the reaction tyramine + O2 + H2O = (4-hydroxyphenyl)acetaldehyde + H2O2 + NH4(+). The catalysed reaction is (R)-noradrenaline + O2 + H2O = (R)-3,4-dihydroxymandelaldehyde + H2O2 + NH4(+). It carries out the reaction 2-phenylethylamine + O2 + H2O = 2-phenylacetaldehyde + H2O2 + NH4(+). The enzyme catalyses N-acetylputrescine + O2 + H2O = 4-acetamidobutanal + H2O2 + NH4(+). In terms of biological role, catalyzes the oxidative deamination of primary and some secondary amines such as neurotransmitters, and exogenous amines including the tertiary amine, neurotoxin 1-methyl-4-phenyl-1,2,3,6-tetrahydropyridine (MPTP), with concomitant reduction of oxygen to hydrogen peroxide and participates in the metabolism of neuroactive and vasoactive amines in the central nervous system and peripheral tissues. Preferentially degrades benzylamine and phenylethylamine. This is Amine oxidase [flavin-containing] B from Canis lupus familiaris (Dog).